Here is a 491-residue protein sequence, read N- to C-terminus: Acetyl-coenzyme A carboxylase carboxyl transferase subunit beta, chloroplastic (491 aa).

Residues 28 to 56 form a disordered region; that stretch reads LGPIENTSESEDPNRNDMKKNSHSWGSRD. Residues 223–491 enclose the CoA carboxyltransferase N-terminal domain; it reads LWVQCENCYG…FPLNKNSIEH (269 aa). Positions 227, 230, 246, and 249 each coordinate Zn(2+). The segment at 227–249 adopts a C4-type zinc-finger fold; it reads CENCYGLNYKKILKSKMNLCEQC.

This sequence belongs to the AccD/PCCB family. As to quaternary structure, acetyl-CoA carboxylase is a heterohexamer composed of biotin carboxyl carrier protein, biotin carboxylase and 2 subunits each of ACCase subunit alpha and ACCase plastid-coded subunit beta (accD). Zn(2+) is required as a cofactor.

Its subcellular location is the plastid. It localises to the chloroplast stroma. It carries out the reaction N(6)-carboxybiotinyl-L-lysyl-[protein] + acetyl-CoA = N(6)-biotinyl-L-lysyl-[protein] + malonyl-CoA. The protein operates within lipid metabolism; malonyl-CoA biosynthesis; malonyl-CoA from acetyl-CoA: step 1/1. Component of the acetyl coenzyme A carboxylase (ACC) complex. Biotin carboxylase (BC) catalyzes the carboxylation of biotin on its carrier protein (BCCP) and then the CO(2) group is transferred by the transcarboxylase to acetyl-CoA to form malonyl-CoA. The chain is Acetyl-coenzyme A carboxylase carboxyl transferase subunit beta, chloroplastic from Daucus carota (Wild carrot).